The following is a 1042-amino-acid chain: Serine/threonine-protein kinase LATS2 (1042 aa).

The tract at residues 23-44 is disordered; sequence REGLKQPSKASTQGLLVGPNSD. The segment covering 30–44 has biased composition (polar residues); sequence SKASTQGLLVGPNSD. S82 is subject to Phosphoserine; by AURKA. In terms of domain architecture, UBA spans 97–138; it reads EVNRQMLQELVNAGCDQEMAGRALKQTGSRSIEAALEYISKM. The segment at 100-140 is interaction with ubiquitinated AMOTL2; sequence RQMLQELVNAGCDQEMAGRALKQTGSRSIEAALEYISKMGY. Residues 237–282 form a disordered region; it reads HFPGTHYGRGHLLSEQPGYGVQRSSSFQNKTPPDAYSSMAKAQGGP. The span at 258–267 shows a compositional bias: polar residues; sequence QRSSSFQNKT. T267 bears the Phosphothreonine mark. Phosphoserine is present on S362. Disordered stretches follow at residues 378 to 399, 442 to 481, and 501 to 550; these read RAGP…LPAP, PATE…HLLL, and QSLR…KRES. Residues 472–475 carry the PPxY motif motif; the sequence is PPPY. The span at 507-530 shows a compositional bias: basic and acidic residues; sequence TEQDRSDKSHKGAKGDKAGRDKKQ. S534 carries the phosphoserine modification. A compositionally biased stretch (basic and acidic residues) spans 541–550; it reads NSRDEEKRES. Residues 626–931 form the Protein kinase domain; sequence FVKIKTLGIG…ADDLKAHPFF (306 aa). ATP-binding positions include 632 to 640 and K655; that span reads LGIGAFGEV. The active-site Proton acceptor is D749. The AGC-kinase C-terminal domain occupies 932–1010; that stretch reads NTIDFSRDIR…RRFFDDNGYP (79 aa). Position 999 is a phosphothreonine (T999). Residues 1014-1042 form a disordered region; that stretch reads PKPSEPAESADPGDADLEGAAEGCQPVYV.

It belongs to the protein kinase superfamily. AGC Ser/Thr protein kinase family. As to quaternary structure, interacts with and is phosphorylated by AURKA. Binds to AR. Interacts with AJUBA during mitosis and this complex regulates organization of the spindle apparatus through recruitment of gamma-tubulin to the centrosome. Interacts (via PPxY motif) with YAP1 (via WW domains). Interacts with MOB1A and MOB1B. Interacts with LIMD1, WTIP and AJUBA. Interacts with SNAI1. Interacts with WWC1, WWC2 and WWC3 (via their WW domains). Interacts (via UBA domain) with ubiquitinated AMOTL2; the interaction promotes LATS2 phosphorylation of YAP1. The cofactor is Mg(2+). Autophosphorylated and phosphorylated during M-phase and the G1/S-phase of the cell cycle. Phosphorylated and activated by STK3/MST2. Phosphorylated by MAP4Ks; in parallel to STK3/MST2 and resulting to its activation. Phosphorylation by NUAK2 may regulate its activity in phosphorylation and inactivation YAP1. In terms of tissue distribution, expressed at high levels in ovary and testis and at lower levels in all other tissues examined.

The protein resides in the cytoplasm. The protein localises to the cytoskeleton. Its subcellular location is the microtubule organizing center. It localises to the centrosome. It is found in the spindle pole. The protein resides in the nucleus. It carries out the reaction L-seryl-[protein] + ATP = O-phospho-L-seryl-[protein] + ADP + H(+). It catalyses the reaction L-threonyl-[protein] + ATP = O-phospho-L-threonyl-[protein] + ADP + H(+). Functionally, negative regulator of YAP1 in the Hippo signaling pathway that plays a pivotal role in organ size control and tumor suppression by restricting proliferation and promoting apoptosis. The core of this pathway is composed of a kinase cascade wherein STK3/MST2 and STK4/MST1, in complex with its regulatory protein SAV1, phosphorylates and activates LATS1/2 in complex with its regulatory protein MOB1, which in turn phosphorylates and inactivates YAP1 oncoprotein and WWTR1/TAZ. Phosphorylation of YAP1 by LATS2 inhibits its translocation into the nucleus to regulate cellular genes important for cell proliferation, cell death, and cell migration. Also phosphorylates YAP1 in response to cell contact inhibition-driven WWP1 ubiquitination of AMOTL2, which results in LATS2 activation. Acts as a tumor suppressor which plays a critical role in centrosome duplication, maintenance of mitotic fidelity and genomic stability. Negatively regulates G1/S transition by down-regulating cyclin E/CDK2 kinase activity. Negative regulator of the androgen receptor. Phosphorylates SNAI1 in the nucleus leading to its nuclear retention and stabilization, which enhances its epithelial-mesenchymal transition and tumor cell invasion/migration activities. This tumor-promoting activity is independent of its effects upon YAP1 or WWTR1/TAZ. Acts as an activator of the NLRP3 inflammasome by mediating phosphorylation of 'Ser-265' of NLRP3 following NLRP3 palmitoylation, promoting NLRP3 activation by NEK7. In Mus musculus (Mouse), this protein is Serine/threonine-protein kinase LATS2.